A 185-amino-acid chain; its full sequence is Transcriptional repressor NrdR (185 aa).

The segment at 1–24 (MRCPFCGGPDTQVKDSRPSEDSSA) is disordered. The segment at 3–34 (CPFCGGPDTQVKDSRPSEDSSAIRRRRVCPDC) is a zinc-finger region. Basic and acidic residues predominate over residues 12 to 24 (QVKDSRPSEDSSA). Residues 49–139 (LVVLKRSGKR…VYKNFREAQD (91 aa)) enclose the ATP-cone domain. The tract at residues 148-185 (GERLDGEGDLPEQGDAVPAPPDEAVAAPRRGRPARKRA) is disordered. A compositionally biased stretch (basic residues) spans 176 to 185 (RRGRPARKRA).

It belongs to the NrdR family. Zn(2+) serves as cofactor.

Its function is as follows. Negatively regulates transcription of bacterial ribonucleotide reductase nrd genes and operons by binding to NrdR-boxes. The protein is Transcriptional repressor NrdR of Methylorubrum extorquens (strain CM4 / NCIMB 13688) (Methylobacterium extorquens).